The following is a 651-amino-acid chain: Threonine--tRNA ligase (651 aa).

The TGS domain maps to 1–61 (MIKITFPDNS…NDDATVKLLK (61 aa)). Residues 242-541 (DHRKIGKEMD…LIEHTAGKFP (300 aa)) are catalytic. Zn(2+) contacts are provided by cysteine 337, histidine 388, and histidine 518.

This sequence belongs to the class-II aminoacyl-tRNA synthetase family. In terms of assembly, homodimer. Zn(2+) is required as a cofactor.

The protein resides in the cytoplasm. It carries out the reaction tRNA(Thr) + L-threonine + ATP = L-threonyl-tRNA(Thr) + AMP + diphosphate + H(+). Catalyzes the attachment of threonine to tRNA(Thr) in a two-step reaction: L-threonine is first activated by ATP to form Thr-AMP and then transferred to the acceptor end of tRNA(Thr). Also edits incorrectly charged L-seryl-tRNA(Thr). This Parabacteroides distasonis (strain ATCC 8503 / DSM 20701 / CIP 104284 / JCM 5825 / NCTC 11152) protein is Threonine--tRNA ligase.